Consider the following 786-residue polypeptide: Constitutive coactivator of peroxisome proliferator-activated receptor gamma (786 aa).

The segment at 1-561 (MGVRGLQGFV…GTPSLEVLWL (561 aa)) is mediates transactivation of PPARG. 2 disordered regions span residues 371–413 (PNQE…KLPS) and 738–786 (HWDS…WRRY). Residues 750-771 (QGYSSYRTDSTHGHSGQSWRNQ) are compositionally biased toward polar residues.

Belongs to the constitutive coactivator of PPAR-gamma family. As to quaternary structure, interacts with ESR1 and RXRA. Interacts with PPARG; in a ligand-independent manner. In terms of tissue distribution, ubiquitously expressed (at protein level).

Its subcellular location is the nucleus. Functions as a transactivator of PPARG and ESR1. Functions in adipogenesis through PPARG activation. This Mus musculus (Mouse) protein is Constitutive coactivator of peroxisome proliferator-activated receptor gamma (Fam120b).